The sequence spans 87 residues: Defensin-A (87 aa).

A signal peptide spans 1–19 (MKFYLVLAFLTLCAVAVTA). A propeptide spanning residues 20 to 44 (LPAGDETRIDLETLEEDLRLVDGAQ) is cleaved from the precursor. 3 disulfides stabilise this stretch: Cys57–Cys78, Cys64–Cys83, and Cys68–Cys85.

In terms of tissue distribution, hemolymph and fat body.

The protein resides in the secreted. Functionally, antibacterial peptide mostly active against Gram-positive and Gram negative bacteria. The polypeptide is Defensin-A (Glossina morsitans morsitans (Savannah tsetse fly)).